Reading from the N-terminus, the 88-residue chain is Small ribosomal subunit protein bS20 (88 aa).

Residues 1–28 are disordered; the sequence is MANIKSQIKRNRQNEKRRLRNKSVKSSL. Basic residues predominate over residues 7–23; sequence QIKRNRQNEKRRLRNKS.

It belongs to the bacterial ribosomal protein bS20 family.

Binds directly to 16S ribosomal RNA. This chain is Small ribosomal subunit protein bS20, found in Salinispora tropica (strain ATCC BAA-916 / DSM 44818 / JCM 13857 / NBRC 105044 / CNB-440).